Consider the following 363-residue polypeptide: Ribosome-binding ATPase YchF (363 aa).

In terms of domain architecture, OBG-type G spans 3-257 (FKCGFVGLPN…VSAYDHLSLK (255 aa)). An ATP-binding site is contributed by 12 to 17 (NVGKST). Residues serine 16 and threonine 36 each contribute to the Mg(2+) site. The 84-residue stretch at 278-361 (NLITFFTAGK…CDGDIIHVLY (84 aa)) folds into the TGS domain.

This sequence belongs to the TRAFAC class OBG-HflX-like GTPase superfamily. OBG GTPase family. YchF/OLA1 subfamily. The cofactor is Mg(2+).

ATPase that binds to both the 70S ribosome and the 50S ribosomal subunit in a nucleotide-independent manner. This is Ribosome-binding ATPase YchF from Buchnera aphidicola subsp. Baizongia pistaciae (strain Bp).